The following is a 123-amino-acid chain: Small ribosomal subunit protein uS12 (123 aa).

At aspartate 89 the chain carries 3-methylthioaspartic acid.

The protein belongs to the universal ribosomal protein uS12 family. In terms of assembly, part of the 30S ribosomal subunit. Contacts proteins S8 and S17. May interact with IF1 in the 30S initiation complex.

In terms of biological role, with S4 and S5 plays an important role in translational accuracy. Interacts with and stabilizes bases of the 16S rRNA that are involved in tRNA selection in the A site and with the mRNA backbone. Located at the interface of the 30S and 50S subunits, it traverses the body of the 30S subunit contacting proteins on the other side and probably holding the rRNA structure together. The combined cluster of proteins S8, S12 and S17 appears to hold together the shoulder and platform of the 30S subunit. This Nitrobacter hamburgensis (strain DSM 10229 / NCIMB 13809 / X14) protein is Small ribosomal subunit protein uS12.